A 286-amino-acid polypeptide reads, in one-letter code: MTKEVVGDKRSFSGKDYQDPPPEPLFDATELGKWSFYRALIAEFIATLLFLYVTIMTVIGYKSQTDPALNPDQCTGVGVLGIAWAFGGMIFILVYCTAGISGGHINPAVTFGLLLARKVTLVRAVMYMVAQCLGAICGVALVKAFQSAYFTRYGGGANGLSDGYSIGTGVAAEIIGTFVLVYTVFSATDPKRSARDSHVPVLAPLPIGFAVFIVHLATIPITGTGINPARSLGAAIIYNKDKAWDHHWIFWVGPFAGAAIAAFYHQFVLRAGAIKALGSFRSQPHV.

Position 1 is an N-acetylmethionine (Met-1). Residues Met-1–Gln-18 are compositionally biased toward basic and acidic residues. A disordered region spans residues Met-1 to Glu-23. Residues Met-1–Arg-38 lie on the Cytoplasmic side of the membrane. N6,N6-dimethyllysine is present on Lys-3. A helical membrane pass occupies residues Ala-39–Ile-59. At Gly-60–Thr-75 the chain is on the extracellular side. The helical transmembrane segment at Gly-76–Cys-96 threads the bilayer. The Cytoplasmic portion of the chain corresponds to Thr-97–Ala-124. The NPA 1 signature appears at Asn-106–Ala-108. A helical transmembrane segment spans residues Val-125 to Phe-145. The Extracellular segment spans residues Gln-146–Ser-165. Residues Ile-166 to Ser-186 form a helical membrane-spanning segment. Topologically, residues Ala-187–Pro-200 are cytoplasmic. Residues Val-201–Ile-221 form a helical membrane-spanning segment. The Extracellular segment spans residues Thr-222–Trp-248. The NPA 2 motif lies at Asn-227–Ala-229. Residues Ile-249–Leu-269 form a helical membrane-spanning segment. The Cytoplasmic portion of the chain corresponds to Arg-270–Val-286. A phosphoserine mark is found at Ser-279 and Ser-282.

It belongs to the MIP/aquaporin (TC 1.A.8) family. PIP (TC 1.A.8.11) subfamily. Expressed in green siliques.

It is found in the cell membrane. In terms of biological role, aquaporins facilitate the transport of water and small neutral solutes across cell membranes. The chain is Probable aquaporin PIP2-5 (PIP2-5) from Arabidopsis thaliana (Mouse-ear cress).